The following is a 229-amino-acid chain: Potassium/proton antiporter CemA (229 aa).

A run of 3 helical transmembrane segments spans residues 6 to 26, 107 to 127, and 189 to 209; these read AFIP…ISLC, ILHF…SFWG, and ILSG…KYWI.

The protein belongs to the CemA family.

The protein resides in the plastid. The protein localises to the chloroplast inner membrane. The catalysed reaction is K(+)(in) + H(+)(out) = K(+)(out) + H(+)(in). Contributes to K(+)/H(+) antiport activity by supporting proton efflux to control proton extrusion and homeostasis in chloroplasts in a light-dependent manner to modulate photosynthesis. Prevents excessive induction of non-photochemical quenching (NPQ) under continuous-light conditions. Indirectly promotes efficient inorganic carbon uptake into chloroplasts. In Lepidium virginicum (Virginia pepperweed), this protein is Potassium/proton antiporter CemA.